A 90-amino-acid chain; its full sequence is Antitoxin epsilon (90 aa).

Belongs to the epsilon antitoxin family. In terms of assembly, in the presence of the zeta toxin, forms an inactive PezA(2)PezT(2) heterotetramer.

Functionally, antitoxin component of a type II toxin-antitoxin (TA) system. Neutralizes the toxic effect of cognate zeta toxin. Part of a postsegregational killing (PSK) system involved in the killing of plasmid-free cells. Continuous synthesis of the epsilon antitoxin is required to counteract the zeta toxin. The protein is Antitoxin epsilon of Streptococcus agalactiae.